The following is a 310-amino-acid chain: Aspartate carbamoyltransferase catalytic subunit (310 aa).

Positions 59 and 60 each coordinate carbamoyl phosphate. Lys87 provides a ligand contact to L-aspartate. Residues Arg109, His139, and Gln142 each coordinate carbamoyl phosphate. The L-aspartate site is built by Arg172 and Arg224. The carbamoyl phosphate site is built by Ala265 and Pro266.

The protein belongs to the aspartate/ornithine carbamoyltransferase superfamily. ATCase family. As to quaternary structure, heterododecamer (2C3:3R2) of six catalytic PyrB chains organized as two trimers (C3), and six regulatory PyrI chains organized as three dimers (R2).

The catalysed reaction is carbamoyl phosphate + L-aspartate = N-carbamoyl-L-aspartate + phosphate + H(+). It participates in pyrimidine metabolism; UMP biosynthesis via de novo pathway; (S)-dihydroorotate from bicarbonate: step 2/3. Functionally, catalyzes the condensation of carbamoyl phosphate and aspartate to form carbamoyl aspartate and inorganic phosphate, the committed step in the de novo pyrimidine nucleotide biosynthesis pathway. This Lactococcus lactis subsp. cremoris (strain MG1363) protein is Aspartate carbamoyltransferase catalytic subunit.